A 186-amino-acid chain; its full sequence is MAVARTGVLGVQWLQRASWNMMPLGARTASHMTKDMFPGPYPRTPEERAAAAKKYNMRVEDYEPYPDDGMGYGDYPKLPDRSQHERDPWYSWDQPDLRLNWGEPMHWHLDMFNRNRVDTSPIPVSWNVMCMQLFGFLAFMIFMCWVGEVYPVYQPVGPKQYPYNNLYLERGGDPSKEPERVVHYEI.

Residues 1 to 28 (MAVARTGVLGVQWLQRASWNMMPLGART) constitute a mitochondrion transit peptide. A helical membrane pass occupies residues 133–153 (LFGFLAFMIFMCWVGEVYPVY).

Belongs to the complex I NDUFB8 subunit family. In terms of assembly, complex I is composed of 45 different subunits.

It is found in the mitochondrion inner membrane. Accessory subunit of the mitochondrial membrane respiratory chain NADH dehydrogenase (Complex I), that is believed not to be involved in catalysis. Complex I functions in the transfer of electrons from NADH to the respiratory chain. The immediate electron acceptor for the enzyme is believed to be ubiquinone. This Pongo pygmaeus (Bornean orangutan) protein is NADH dehydrogenase [ubiquinone] 1 beta subcomplex subunit 8, mitochondrial (NDUFB8).